We begin with the raw amino-acid sequence, 550 residues long: Zinc finger protein 382 (550 aa).

The interval 1-105 (MPLQGSVSFK…RHSRPLIFIN (105 aa)) is mediates interaction with TRIM28. Represses transcription stretches follow at residues 5–46 (GSVS…FVSV) and 70–211 (IFPS…PEQP). The 72-residue stretch at 7 to 78 (VSFKDVTVDF…RIFPSYSYLE (72 aa)) folds into the KRAB domain. The C2H2-type 1; degenerate zinc finger occupies 212 to 234 (FDHNECEKSFLMKGMLFTHTRAH). C2H2-type zinc fingers lie at residues 296-318 (FHCP…QRIH), 324-346 (YVCN…EKTH), 352-374 (FICI…HKTH), 380-402 (YECP…QRTH), 408-430 (YQCN…QRTH), 436-458 (YICN…QRIH), 464-486 (YICN…HRIH), 492-514 (NGCP…QKTH), and 520-542 (YECK…QKTH). The segment at 296 to 550 (FHCPYCGNNF…THKVETTGIQ (255 aa)) is required for transcriptional repression activity; probably mediates sequence-specific DNA-binding.

The protein belongs to the krueppel C2H2-type zinc-finger protein family. Interacts with TRIM28; enhances the transcriptional repressor activity. As to expression, specifically expressed in heart with a weaker expression also detected in skeletal muscle.

Its subcellular location is the nucleus. Functions as a sequence-specific transcriptional repressor. The chain is Zinc finger protein 382 (ZNF382) from Homo sapiens (Human).